The sequence spans 267 residues: Serine/arginine-rich splicing factor 7 (267 aa).

An RRM domain is found at 40 to 113 (TKVYVGNLGT…SRVRVELSTG (74 aa)). N6-acetyllysine; alternate is present on K53. K53 participates in a covalent cross-link: Glycyl lysine isopeptide (Lys-Gly) (interchain with G-Cter in SUMO2); alternate. S61 is modified (phosphoserine). The segment at 110 to 127 (LSTGMPRRSRFDRPPARR) is sufficient for interaction with NXF1. Residues 133–150 (DRCYECGEKGHYAYDCHR) form a CCHC-type zinc finger. Positions 152 to 209 (SRRRRSRSRSRSHSRSRGRRYSRSRSRSRGRRSRSASPRRSRSVSLRRSRSASLRRSR) are enriched in basic residues. Positions 152–267 (SRRRRSRSRS…HRSASPERMD (116 aa)) are disordered. Repeat copies occupy residues 182 to 189 (RRSRSASP), 190 to 197 (RRSRSVSL), 198 to 205 (RRSRSASL), and 206 to 213 (RRSRSGSI). Positions 182-255 (RRSRSASPRR…SPKRSRSPSG (74 aa)) are 6 X 8 AA repeats of R-R-S-R-S-X-S-X. Phosphoserine occurs at positions 192, 194, and 196. A phosphoserine mark is found at S210, S212, S221, S223, and S225. Positions 223–251 (SRSRSRSRSISRPRSSRSKSRSPSPKRSR) are enriched in basic residues. The 5; approximate repeat unit spans residues 240–247 (SKSRSPSP). Residues 248–255 (KRSRSPSG) form a 6; approximate repeat. S260 and S262 each carry phosphoserine.

This sequence belongs to the splicing factor SR family. In terms of assembly, found in large molecular weight complexes containing CCNL1 and the p110 isoforms of either CDC2L1 or CDC2L2. Interacts with CCNL2 and CPSF6. Interacts with NXF1. Interacts with YTHDC1. Post-translationally, extensively phosphorylated on serine residues in the RS domain.

Its subcellular location is the nucleus. It localises to the cytoplasm. In terms of biological role, required for pre-mRNA splicing. Represses the splicing of MAPT/Tau exon 10. May function as export adapter involved in mRNA nuclear export such as of histone H2A. Binds mRNA which is thought to be transferred to the NXF1-NXT1 heterodimer for export (TAP/NXF1 pathway); enhances NXF1-NXT1 RNA-binding activity. RNA-binding is semi-sequence specific. This chain is Serine/arginine-rich splicing factor 7 (Srsf7), found in Mus musculus (Mouse).